Here is a 748-residue protein sequence, read N- to C-terminus: MAAAPAEQGKGKRVQPPWSPPEGTKHSRLCLYNSLTRNKEIFQPQNGKKVTWYCCGPTVYDASHMGHARSYISFDILRRILRDYFKFDVFYCMNITDIDDKIIKRTRQNYLFEQYRKNKSTPAQLLEDVKTASELFSVKLSETTDPDKRQMLEKIQNAVKSAFDPLQEAVQAKLPAEEISRCHEILLEEAKDLLSDWLDSKFGSQVTDNSIFSELPKFWEGEFHKDMEALNVLPPDVLTRVSEYVPEIVAFVKKIVDNGYGYVSNGSVYFDTVKFGSSEKHSYAKLVPEAVGDQKALQEGEGDLSISADRLCEKHSPNDFALWKSSKPGEPSWDSPWGKGRPGWHIECSAMAGSILGESMDIHGGGFDLRFPHHDNELAQSEAYFENDNWVRYFLHTGHLTIAGCKMSKSLKNFITIKDALQKHTARQLRLAFLMHSWKDTLDYSSNTMESAIQYEKFMNEFFLNVKDILRAPTDVTGQFQKWENQEAELNKNFYDKKAAIHEALCDNVDTRSVLEEMRSLVSQSNSYIAAKKSARQMPNRLLLENISCYLTQMLKIFGAIESDDAIGFPVGGNNQNINIESTVMPYLQVLSEFREGVRQIAREKKVTEVLQLSDALRDDILPELGVRFEDHEGLPTVVKLVDKDTLLKEREEKKKIEEEKKRKKEEAARKKQEQEAAKLAKMKIPPHEMFKSEHDKYSKFDENGFPTHDTEGKELSKGQIKKLKKLYETQEKLYKEYLQMVQNGSAN.

Residues 1-25 (MAAAPAEQGKGKRVQPPWSPPEGTK) form a disordered region. Cys-55 is a Zn(2+) binding site. Residue Gly-56 coordinates L-cysteine. The 'HIGH' region motif lies at 57-67 (PTVYDASHMGH). An L-cysteine-binding site is contributed by Thr-96. The 'KIIK' region motif lies at 101–104 (KIIK). 3 residues coordinate Zn(2+): Cys-348, His-373, and Glu-377. His-373 contributes to the L-cysteine binding site. The short motif at 406–410 (KMSKS) is the 'KMSKS' region element. Lys-409 contacts ATP. Basic and acidic residues-rich tracts occupy residues 656–679 (KIEE…EAAK) and 686–717 (PPHE…KELS). The disordered stretch occupies residues 656 to 719 (KIEEEKKRKK…DTEGKELSKG (64 aa)).

This sequence belongs to the class-I aminoacyl-tRNA synthetase family. As to quaternary structure, homodimer. The cofactor is Zn(2+).

Its subcellular location is the cytoplasm. The enzyme catalyses tRNA(Cys) + L-cysteine + ATP = L-cysteinyl-tRNA(Cys) + AMP + diphosphate. In terms of biological role, catalyzes the ATP-dependent ligation of cysteine to tRNA(Cys). In Gallus gallus (Chicken), this protein is Cysteine--tRNA ligase, cytoplasmic (CARS1).